Reading from the N-terminus, the 151-residue chain is Cell division control protein 2 homolog 2 (151 aa).

The Protein kinase domain maps to 1 to 151; that stretch reads ALKEIRMDNE…IMQTLQIESL (151 aa). K3 lines the ATP pocket. D113 functions as the Proton acceptor in the catalytic mechanism.

It belongs to the protein kinase superfamily. CMGC Ser/Thr protein kinase family. CDC2/CDKX subfamily.

It catalyses the reaction L-seryl-[protein] + ATP = O-phospho-L-seryl-[protein] + ADP + H(+). The enzyme catalyses L-threonyl-[protein] + ATP = O-phospho-L-threonyl-[protein] + ADP + H(+). The catalysed reaction is [DNA-directed RNA polymerase] + ATP = phospho-[DNA-directed RNA polymerase] + ADP + H(+). This Pisum sativum (Garden pea) protein is Cell division control protein 2 homolog 2.